The primary structure comprises 372 residues: Probable basic-leucine zipper transcription factor G (372 aa).

2 disordered regions span residues 1–20 and 176–234; these read MLSVWNLPVEQQPQQQQQQQ and TTNN…EKFE. 2 stretches are compositionally biased toward low complexity: residues 11–20 and 176–215; these read QQPQQQQQQQ and TTNNNNNNNNNNNNNNNNNNSNNNNSNNNNINNNNNKSNT. Polar residues predominate over residues 223 to 234; the sequence is IRNSNSTFEKFE. Residues 277–340 enclose the bZIP domain; it reads ELKRQKRLIK…LILKAEVGQL (64 aa). Residues 279 to 301 form a basic motif region; sequence KRQKRLIKNRESAHLSRQRKRER. The segment at 305-340 is leucine-zipper; sequence LEHRVEELSSNSIDINKTLSSLENENLILKAEVGQL.

This sequence belongs to the bZIP family.

Its subcellular location is the nucleus. Functionally, probable transcriptional regulator. This is Probable basic-leucine zipper transcription factor G (bzpG) from Dictyostelium discoideum (Social amoeba).